The following is a 299-amino-acid chain: DNA-binding transcriptional repressor CapW (299 aa).

The span at 1–15 (MPDNFREGDKQDSQK) shows a compositional bias: basic and acidic residues. The tract at residues 1–21 (MPDNFREGDKQDSQKGRQGAR) is disordered. A winged HTH domain region spans residues 1–95 (MPDNFREGDK…LFQPVYMTSS (95 aa)). The tract at residues 96–207 (LECYLNDLLQ…LSRIVQAQNA (112 aa)) is WYL domain. In terms of domain architecture, WYL spans 131 to 211 (LRRLDTDVVS…VQAQNAGPDE (81 aa)). A probable ligand-binding region region spans residues 156 to 200 (YQSMSDPQGSKRTLTPHSLVHDGYRWHTRAWCHKRGEYRDFLLSR). The WCX domain stretch occupies residues 208–299 (GPDEERANGD…KDEIYALLKQ (92 aa)).

As to quaternary structure, homodimer.

Functionally, transcriptional regulator of a CBASS antivirus system. CBASS (cyclic oligonucleotide-based antiphage signaling system) provides immunity against bacteriophage. The CD-NTase protein synthesizes cyclic nucleotides in response to infection; these serve as specific second messenger signals. The signals activate a diverse range of effectors, leading to bacterial cell death and thus abortive phage infection. A type III CBASS system. Expression of this CBASS system (Cap18-Cap6-Cap7-CdnC-CapW-Cap17) in a susceptible E.coli (strain MG1655) confers resistance to bacteriophage P1. Binds specifically to and represses expression from the CBASS promoter, found between the genes for divergently transcribed capW and cdnC. This is DNA-binding transcriptional repressor CapW from Escherichia coli (strain KTE188).